The chain runs to 144 residues: Large ribosomal subunit protein uL15 (144 aa).

Positions 1–52 (MRLNSLSPAEGAKHSAKRLGRGIGSGLGKTGGRGHKGQKSRTGGGVRRGFEG) are disordered. Residues 21–31 (RGIGSGLGKTG) are compositionally biased toward gly residues.

It belongs to the universal ribosomal protein uL15 family. Part of the 50S ribosomal subunit.

Binds to the 23S rRNA. The chain is Large ribosomal subunit protein uL15 from Actinobacillus pleuropneumoniae serotype 5b (strain L20).